The primary structure comprises 224 residues: MAIHEWPEGERPREKLLALGASALSDAELLAIFLRVGVKGRSAVDLARDLLLAFGGLRPLLEADLARFCAEHGLGEAKYVQLQASLELSRRHLGSLLERGAALTSPTLVRRFLTSQLRHLPHEAFAALFLDTQHRVIRFETLSKGTLDSASVYPREVSRRALALNAGALIFAHNHPSGVAEPSDADRRITQRLSDALGLFDIRVLDHFVVGDGEVVSFAERGWL.

Positions 102–224 (ALTSPTLVRR…VVSFAERGWL (123 aa)) constitute an MPN domain. Residues histidine 173, histidine 175, and aspartate 186 each coordinate Zn(2+). The JAMM motif signature appears at 173-186 (HNHPSGVAEPSDAD).

This sequence belongs to the UPF0758 family.

This chain is UPF0758 protein Csal_2972, found in Chromohalobacter salexigens (strain ATCC BAA-138 / DSM 3043 / CIP 106854 / NCIMB 13768 / 1H11).